The following is a 261-amino-acid chain: Cytochrome c oxidase subunit 3 (261 aa).

Residues 1–15 (MAHQAHAYHMVDPSP) lie on the Mitochondrial matrix side of the membrane. Residues 16–34 (WPLTGAIAALLLTSGTAVW) traverse the membrane as a helical segment. At 35–40 (FHFHSL) the chain is on the mitochondrial intermembrane side. Residues 41–66 (TLLTLGNILLLLTMYQWWRDIIREGT) traverse the membrane as a helical segment. At 67-72 (FQGHHT) the chain is on the mitochondrial matrix side. A helical transmembrane segment spans residues 73–105 (PPVQKGLRYGMILFITSEVFFFLGFFWAFYHAS). Topologically, residues 106 to 128 (LAPTPELGGCWPPTGITTLDPFE) are mitochondrial intermembrane. Residues 129–152 (VPLLNTAVLLASGVTVTWAHHSIM) form a helical membrane-spanning segment. Over 153–155 (EGE) the chain is Mitochondrial matrix. Residues 156-183 (RKQTIQALTLTILLGFYFTFLQGMEYYE) traverse the membrane as a helical segment. The Mitochondrial intermembrane segment spans residues 184–190 (APFTIAD). Residues 191 to 223 (GVYGSTFFVATGFHGLHVIIGSTFLAVCLLRQV) form a helical membrane-spanning segment. The Mitochondrial matrix portion of the chain corresponds to 224-232 (QYHFTSEHH). A helical membrane pass occupies residues 233–256 (FGFEAAAWYWHFVDVVWLFLYVSI). The Mitochondrial intermembrane portion of the chain corresponds to 257–261 (YWWGS).

It belongs to the cytochrome c oxidase subunit 3 family. In terms of assembly, component of the cytochrome c oxidase (complex IV, CIV), a multisubunit enzyme composed of 14 subunits. The complex is composed of a catalytic core of 3 subunits MT-CO1, MT-CO2 and MT-CO3, encoded in the mitochondrial DNA, and 11 supernumerary subunits COX4I, COX5A, COX5B, COX6A, COX6B, COX6C, COX7A, COX7B, COX7C, COX8 and NDUFA4, which are encoded in the nuclear genome. The complex exists as a monomer or a dimer and forms supercomplexes (SCs) in the inner mitochondrial membrane with NADH-ubiquinone oxidoreductase (complex I, CI) and ubiquinol-cytochrome c oxidoreductase (cytochrome b-c1 complex, complex III, CIII), resulting in different assemblies (supercomplex SCI(1)III(2)IV(1) and megacomplex MCI(2)III(2)IV(2)).

Its subcellular location is the mitochondrion inner membrane. It catalyses the reaction 4 Fe(II)-[cytochrome c] + O2 + 8 H(+)(in) = 4 Fe(III)-[cytochrome c] + 2 H2O + 4 H(+)(out). Functionally, component of the cytochrome c oxidase, the last enzyme in the mitochondrial electron transport chain which drives oxidative phosphorylation. The respiratory chain contains 3 multisubunit complexes succinate dehydrogenase (complex II, CII), ubiquinol-cytochrome c oxidoreductase (cytochrome b-c1 complex, complex III, CIII) and cytochrome c oxidase (complex IV, CIV), that cooperate to transfer electrons derived from NADH and succinate to molecular oxygen, creating an electrochemical gradient over the inner membrane that drives transmembrane transport and the ATP synthase. Cytochrome c oxidase is the component of the respiratory chain that catalyzes the reduction of oxygen to water. Electrons originating from reduced cytochrome c in the intermembrane space (IMS) are transferred via the dinuclear copper A center (CU(A)) of subunit 2 and heme A of subunit 1 to the active site in subunit 1, a binuclear center (BNC) formed by heme A3 and copper B (CU(B)). The BNC reduces molecular oxygen to 2 water molecules using 4 electrons from cytochrome c in the IMS and 4 protons from the mitochondrial matrix. This Oncorhynchus clarkii (Cutthroat trout) protein is Cytochrome c oxidase subunit 3 (mt-co3).